A 352-amino-acid polypeptide reads, in one-letter code: SNF1-related protein kinase regulatory subunit gamma-like PV42a (352 aa).

CBS domains follow at residues 24–106, 122–196, 210–281, and 297–352; these read RNRR…LSDL, LEGL…FDDL, VNDS…ELQT, and KERE…STLS.

The protein belongs to the 5'-AMP-activated protein kinase gamma subunit family. Expressed highly in rosette leaves, cauline leaves, open flowers, developing siliques and dry seeds, but at a low level in stems and floral buds.

Its function is as follows. Plays redundant role with PV42b in regulating male gametogenesis and pollen tube guidance. In Arabidopsis thaliana (Mouse-ear cress), this protein is SNF1-related protein kinase regulatory subunit gamma-like PV42a (PV42A).